A 379-amino-acid chain; its full sequence is Chaperone protein DnaJ (379 aa).

A J domain is found at D5–G71. Residues G149–R231 form a CR-type zinc finger. Zn(2+) is bound by residues C162, C165, C179, C182, C205, C208, C219, and C222. CXXCXGXG motif repeat units follow at residues C162–G169, C179–G186, C205–G212, and C219–G226.

Belongs to the DnaJ family. Homodimer. Zn(2+) is required as a cofactor.

It localises to the cytoplasm. Its function is as follows. Participates actively in the response to hyperosmotic and heat shock by preventing the aggregation of stress-denatured proteins and by disaggregating proteins, also in an autonomous, DnaK-independent fashion. Unfolded proteins bind initially to DnaJ; upon interaction with the DnaJ-bound protein, DnaK hydrolyzes its bound ATP, resulting in the formation of a stable complex. GrpE releases ADP from DnaK; ATP binding to DnaK triggers the release of the substrate protein, thus completing the reaction cycle. Several rounds of ATP-dependent interactions between DnaJ, DnaK and GrpE are required for fully efficient folding. Also involved, together with DnaK and GrpE, in the DNA replication of plasmids through activation of initiation proteins. The polypeptide is Chaperone protein DnaJ (Thermosipho africanus (strain TCF52B)).